The primary structure comprises 159 residues: RNA pyrophosphohydrolase (159 aa).

In terms of domain architecture, Nudix hydrolase spans 6–149 (GYRPNVGIVI…KRNVYRRMMK (144 aa)). Positions 38–59 (GGINSGETAEQAMFRELFEEVG) match the Nudix box motif.

The protein belongs to the Nudix hydrolase family. RppH subfamily. A divalent metal cation serves as cofactor.

Its function is as follows. Accelerates the degradation of transcripts by removing pyrophosphate from the 5'-end of triphosphorylated RNA, leading to a more labile monophosphorylated state that can stimulate subsequent ribonuclease cleavage. This chain is RNA pyrophosphohydrolase, found in Baumannia cicadellinicola subsp. Homalodisca coagulata.